The following is a 444-amino-acid chain: ATP-dependent protease ATPase subunit HslU (444 aa).

ATP contacts are provided by residues Ile20 and 62 to 67; that span reads GVGKTE. The interval 137-162 is disordered; that stretch reads LVPPSRGTSGEPERGEDSNARQTFRK. Asp257, Glu322, and Arg394 together coordinate ATP.

This sequence belongs to the ClpX chaperone family. HslU subfamily. In terms of assembly, a double ring-shaped homohexamer of HslV is capped on each side by a ring-shaped HslU homohexamer. The assembly of the HslU/HslV complex is dependent on binding of ATP.

Its subcellular location is the cytoplasm. ATPase subunit of a proteasome-like degradation complex; this subunit has chaperone activity. The binding of ATP and its subsequent hydrolysis by HslU are essential for unfolding of protein substrates subsequently hydrolyzed by HslV. HslU recognizes the N-terminal part of its protein substrates and unfolds these before they are guided to HslV for hydrolysis. In Bordetella petrii (strain ATCC BAA-461 / DSM 12804 / CCUG 43448), this protein is ATP-dependent protease ATPase subunit HslU.